The following is a 534-amino-acid chain: Benzaldehyde dehydrogenase, mitochondrial (534 aa).

A mitochondrion-targeting transit peptide spans 1–29 (MAAHRFSSLLSRSVPLLSRGGKQSYLGRG). NAD(+) is bound by residues 199–202 (IPWN), 225–228 (KTAE), 258–259 (GP), 278–279 (GS), and 301–303 (ELG). The active-site Proton acceptor is the Glu-301. The Nucleophile role is filled by Cys-335. NAD(+) is bound by residues 381 to 385 (DQFEK) and 432 to 434 (EIF).

Belongs to the aldehyde dehydrogenase family. Homotetramer. In terms of tissue distribution, expressed predominantly in the upper and lower flower petal lobes, and, at low levels, in flower tubes, pistils, stamens and sepals.

The protein resides in the mitochondrion. It carries out the reaction an aldehyde + NAD(+) + H2O = a carboxylate + NADH + 2 H(+). The catalysed reaction is acetaldehyde + NAD(+) + H2O = acetate + NADH + 2 H(+). It catalyses the reaction benzaldehyde + NAD(+) + H2O = benzoate + NADH + 2 H(+). The enzyme catalyses 2-phenylacetaldehyde + NAD(+) + H2O = 2-phenylacetate + NADH + 2 H(+). Its pathway is aromatic compound metabolism. Inhibited by disulfiram. In terms of biological role, component of the floral volatile benzenoid/phenylpropanoid (FVBP) biosynthetic pathway. Catalyzes the oxidation of benzaldehyde to benzoic acid (BA). Capable of oxidizing a broad spectrum of aliphatic aldehydes; increased carbon chain length results in a decrease in its efficiency. This Antirrhinum majus (Garden snapdragon) protein is Benzaldehyde dehydrogenase, mitochondrial.